Consider the following 371-residue polypeptide: Dual-specificity RNA methyltransferase RlmN (371 aa).

Glu86 serves as the catalytic Proton acceptor. Residues 105–338 (RHARYTICVS…CTIRQSKGLD (234 aa)) enclose the Radical SAM core domain. The cysteines at positions 112 and 343 are disulfide-linked. Positions 119, 123, and 126 each coordinate [4Fe-4S] cluster. Residues 169–170 (GE), Ser201, 224–226 (SLH), and Asn300 contribute to the S-adenosyl-L-methionine site. Catalysis depends on Cys343, which acts as the S-methylcysteine intermediate. Over residues 348-363 (QRSQNLSPSNNNTSKP) the composition is skewed to polar residues. The disordered stretch occupies residues 348–371 (QRSQNLSPSNNNTSKPSDIKKSES).

This sequence belongs to the radical SAM superfamily. RlmN family. [4Fe-4S] cluster is required as a cofactor.

The protein resides in the cytoplasm. The catalysed reaction is adenosine(2503) in 23S rRNA + 2 reduced [2Fe-2S]-[ferredoxin] + 2 S-adenosyl-L-methionine = 2-methyladenosine(2503) in 23S rRNA + 5'-deoxyadenosine + L-methionine + 2 oxidized [2Fe-2S]-[ferredoxin] + S-adenosyl-L-homocysteine. It catalyses the reaction adenosine(37) in tRNA + 2 reduced [2Fe-2S]-[ferredoxin] + 2 S-adenosyl-L-methionine = 2-methyladenosine(37) in tRNA + 5'-deoxyadenosine + L-methionine + 2 oxidized [2Fe-2S]-[ferredoxin] + S-adenosyl-L-homocysteine. Functionally, specifically methylates position 2 of adenine 2503 in 23S rRNA and position 2 of adenine 37 in tRNAs. m2A2503 modification seems to play a crucial role in the proofreading step occurring at the peptidyl transferase center and thus would serve to optimize ribosomal fidelity. The sequence is that of Dual-specificity RNA methyltransferase RlmN from Campylobacter curvus (strain 525.92).